Consider the following 259-residue polypeptide: UPF0246 protein PST_1170 (259 aa).

Belongs to the UPF0246 family.

This Stutzerimonas stutzeri (strain A1501) (Pseudomonas stutzeri) protein is UPF0246 protein PST_1170.